A 330-amino-acid polypeptide reads, in one-letter code: Aspartate--ammonia ligase (330 aa).

Belongs to the class-II aminoacyl-tRNA synthetase family. AsnA subfamily.

The protein localises to the cytoplasm. The catalysed reaction is L-aspartate + NH4(+) + ATP = L-asparagine + AMP + diphosphate + H(+). It functions in the pathway amino-acid biosynthesis; L-asparagine biosynthesis; L-asparagine from L-aspartate (ammonia route): step 1/1. The protein is Aspartate--ammonia ligase of Streptococcus pyogenes serotype M6 (strain ATCC BAA-946 / MGAS10394).